Here is an 871-residue protein sequence, read N- to C-terminus: uncharacterized protein (871 aa).

11 consecutive transmembrane segments (helical) span residues 11 to 31 (AFVSSLVFNFAIFCAFIGLFL), 92 to 112 (YLFTFGALCILGCLVLFPILL), 139 to 159 (FYAHVFLSWLFFGFTIFIIYR), 380 to 400 (TILTLMIIFWAFPVAVVGCIS), 422 to 442 (LLGIITGILPSVALSILMSLV), 475 to 495 (VQVFLVTTMTSAATSAVVQVI), 520 to 540 (FLLQGLSIPGGALLQIVTLLL), 562 to 582 (LSAPSWGTVYPVYSLLVTIMI), 586 to 606 (IIAPIIIGFAAVAFVLIYFAY), 629 to 649 (LFQVFVGLYLAEVCLIGLFVL), and 653 to 673 (WGATVLEAVFLGFTVACHLYF). 6 positions are modified to phosphoserine: serine 725, serine 726, serine 727, serine 729, serine 737, and serine 761. Over residues 727–740 (SGSDEFLETSSRTS) the composition is skewed to polar residues. The segment at 727–746 (SGSDEFLETSSRTSENTKEK) is disordered.

It belongs to the CSC1 (TC 1.A.17) family.

It localises to the golgi apparatus membrane. Its function is as follows. Acts as an osmosensitive calcium-permeable cation channel. This is an uncharacterized protein from Schizosaccharomyces pombe (strain 972 / ATCC 24843) (Fission yeast).